Reading from the N-terminus, the 204-residue chain is Thymidylate kinase (204 aa).

10–17 contributes to the ATP binding site; sequence GGDGAGKT.

The protein belongs to the thymidylate kinase family.

It catalyses the reaction dTMP + ATP = dTDP + ADP. In terms of biological role, phosphorylation of dTMP to form dTDP in both de novo and salvage pathways of dTTP synthesis. The sequence is that of Thymidylate kinase from Cutibacterium acnes (strain DSM 16379 / KPA171202) (Propionibacterium acnes).